Consider the following 314-residue polypeptide: 4-hydroxy-3-methylbut-2-enyl diphosphate reductase (314 aa).

Cys12 is a [4Fe-4S] cluster binding site. Residues His41 and His74 each contribute to the (2E)-4-hydroxy-3-methylbut-2-enyl diphosphate site. Dimethylallyl diphosphate is bound by residues His41 and His74. Isopentenyl diphosphate contacts are provided by His41 and His74. Cys96 contributes to the [4Fe-4S] cluster binding site. His124 is a binding site for (2E)-4-hydroxy-3-methylbut-2-enyl diphosphate. His124 contributes to the dimethylallyl diphosphate binding site. Isopentenyl diphosphate is bound at residue His124. Glu126 functions as the Proton donor in the catalytic mechanism. Residue Thr167 participates in (2E)-4-hydroxy-3-methylbut-2-enyl diphosphate binding. Cys197 is a [4Fe-4S] cluster binding site. The (2E)-4-hydroxy-3-methylbut-2-enyl diphosphate site is built by Ser225, Ser226, Asn227, and Ser269. 4 residues coordinate dimethylallyl diphosphate: Ser225, Ser226, Asn227, and Ser269. Positions 225, 226, 227, and 269 each coordinate isopentenyl diphosphate.

The protein belongs to the IspH family. Requires [4Fe-4S] cluster as cofactor.

It carries out the reaction isopentenyl diphosphate + 2 oxidized [2Fe-2S]-[ferredoxin] + H2O = (2E)-4-hydroxy-3-methylbut-2-enyl diphosphate + 2 reduced [2Fe-2S]-[ferredoxin] + 2 H(+). It catalyses the reaction dimethylallyl diphosphate + 2 oxidized [2Fe-2S]-[ferredoxin] + H2O = (2E)-4-hydroxy-3-methylbut-2-enyl diphosphate + 2 reduced [2Fe-2S]-[ferredoxin] + 2 H(+). The protein operates within isoprenoid biosynthesis; dimethylallyl diphosphate biosynthesis; dimethylallyl diphosphate from (2E)-4-hydroxy-3-methylbutenyl diphosphate: step 1/1. Its pathway is isoprenoid biosynthesis; isopentenyl diphosphate biosynthesis via DXP pathway; isopentenyl diphosphate from 1-deoxy-D-xylulose 5-phosphate: step 6/6. Functionally, catalyzes the conversion of 1-hydroxy-2-methyl-2-(E)-butenyl 4-diphosphate (HMBPP) into a mixture of isopentenyl diphosphate (IPP) and dimethylallyl diphosphate (DMAPP). Acts in the terminal step of the DOXP/MEP pathway for isoprenoid precursor biosynthesis. The chain is 4-hydroxy-3-methylbut-2-enyl diphosphate reductase from Mannheimia succiniciproducens (strain KCTC 0769BP / MBEL55E).